A 191-amino-acid chain; its full sequence is Peptidyl-tRNA hydrolase (191 aa).

TRNA is bound at residue Y14. H19 serves as the catalytic Proton acceptor. The tRNA site is built by Y64, N66, and N112.

Belongs to the PTH family. In terms of assembly, monomer.

The protein resides in the cytoplasm. The catalysed reaction is an N-acyl-L-alpha-aminoacyl-tRNA + H2O = an N-acyl-L-amino acid + a tRNA + H(+). Its function is as follows. Hydrolyzes ribosome-free peptidyl-tRNAs (with 1 or more amino acids incorporated), which drop off the ribosome during protein synthesis, or as a result of ribosome stalling. Catalyzes the release of premature peptidyl moieties from peptidyl-tRNA molecules trapped in stalled 50S ribosomal subunits, and thus maintains levels of free tRNAs and 50S ribosomes. In Clostridium botulinum (strain Alaska E43 / Type E3), this protein is Peptidyl-tRNA hydrolase.